A 1277-amino-acid polypeptide reads, in one-letter code: Protein FAM83H (1277 aa).

A compositionally biased stretch (polar residues) spans 1–12; it reads MARRSQSSSQGE. Disordered regions lie at residues 1 to 20, 67 to 98, 717 to 756, 772 to 805, 971 to 1018, 1070 to 1130, 1158 to 1225, and 1247 to 1266; these read MARRSQSSSQGENPLDPNYL, SLQRPPESGQENPYPDSVYGSQEDADGSSGTY, FGSTGDLSVEKAKENPPAEKEKEEGLLSRHDSFRTRTNPL, SKLEQHTSTAESVQEMQKEQSTSELVSENETGRT, EQTS…NSAF, KAEE…SRLS, QKNR…RDIL, and KKDEQPSHADDNDDKKAGKI. Over residues 724 to 750 the composition is skewed to basic and acidic residues; that stretch reads SVEKAKENPPAEKEKEEGLLSRHDSFR. Polar residues-rich tracts occupy residues 777–805, 971–982, 993–1015, and 1112–1130; these read HTSTAESVQEMQKEQSTSELVSENETGRT, EQTSSTIQTIGN, SGPTITEVTEATQSSENLPTRPN, and KSLSVSPPKTSSISQSRLS. The span at 1204–1215 shows a compositional bias: low complexity; that stretch reads SFLSRSRFSRPS. Basic and acidic residues predominate over residues 1247–1263; that stretch reads KKDEQPSHADDNDDKKA.

The protein belongs to the FAM83 family.

It localises to the cytoplasm. The protein resides in the cytoskeleton. Functionally, may play a role in keratin cytoskeleton disassembly. This chain is Protein FAM83H, found in Xenopus tropicalis (Western clawed frog).